The following is a 351-amino-acid chain: Leukotriene B4 receptor 1 (351 aa).

The Extracellular portion of the chain corresponds to 1 to 21 (MAANTTSTAATSSPGGMSLSL). Asn4 carries an N-linked (GlcNAc...) asparagine glycan. A helical membrane pass occupies residues 22–44 (LPIVLLSVALVVGLPGNSFVVWS). The Cytoplasmic portion of the chain corresponds to 45-56 (ILKRMQKRSVTA). Residues 57–77 (LLVLNLALADLAVLLTAPFFL) form a helical membrane-spanning segment. Topologically, residues 78–93 (HFLARGTWSFEVTGCR) are extracellular. A helical membrane pass occupies residues 94 to 115 (LCHYVCGVSMYASVLLITIMSL). The Cytoplasmic segment spans residues 116 to 140 (DRSLAVARPFVSQKVRTKAFARWVL). The chain crosses the membrane as a helical span at residues 141-161 (AGIWVVSFLLAIPVLVYRTVT). At 162–179 (PKNKTLICDSRYPSDGHK) the chain is on the extracellular side. A glycan (N-linked (GlcNAc...) asparagine) is linked at Asn164. Residues 180 to 200 (VFHLLFEAITGFLLPFLAVVA) traverse the membrane as a helical segment. The Cytoplasmic segment spans residues 201–222 (SYSDIGRRLQARRFRRSRRTGR). A helical membrane pass occupies residues 223 to 243 (LVVLIILAFAAFWLPYHLVNL). Over 244–268 (VEAGRTLAGWDKNSPAGQRLKLARY) the chain is Extracellular. A helical membrane pass occupies residues 269 to 289 (VLIALAFLSSSVNPVLYACAG). At 290 to 351 (GGLLRSAGVG…TSSTPPESSK (62 aa)) the chain is on the cytoplasmic side. Composition is skewed to polar residues over residues 311–327 (EVSS…TPKA) and 339–351 (SFMT…ESSK). Residues 311–351 (EVSSTRRGGTLVQTPKATPTCPEPGPTDSFMTSSTPPESSK) are disordered.

It belongs to the G-protein coupled receptor 1 family. Phosphorylated by GRK6 upon leukotriene B4 binding; which promotes desensitization. As to expression, exclusively expressed in polymorphonuclear leukocytes.

Its subcellular location is the cell membrane. Functionally, receptor for leukotriene B4, a potent chemoattractant involved in inflammation and immune response. In Rattus norvegicus (Rat), this protein is Leukotriene B4 receptor 1 (Ltb4r).